An 877-amino-acid chain; its full sequence is Potassium transporter 23 (877 aa).

2 disordered regions span residues 1–60 (MDDD…SLDG) and 72–92 (ASAG…RASS). The Cytoplasmic segment spans residues 1-126 (MDDDDSGIQE…RGAHGHSSKE (126 aa)). The span at 12 to 28 (PAPPPPPPPPPPPPPPL) shows a compositional bias: pro residues. The span at 76-86 (GASGGGGGGGP) shows a compositional bias: gly residues. Residues 127 to 147 (ISMLSTVAMAFQTLGVVYGDM) form a helical membrane-spanning segment. The Extracellular segment spans residues 148-173 (GTSPLYVFSDVFSKVPIKSEVEILGA). Residues 174-194 (LSLVMYTIALIPFAKYVFIVL) form a helical membrane-spanning segment. Residues 195 to 260 (KANDNGEGGT…SLEKNPVFKN (66 aa)) are Cytoplasmic-facing. A helical transmembrane segment spans residues 261–281 (ILLFLVLMGTSMVIGDGILTP). Topologically, residues 282–295 (SMSVMSAVSGLQGR) are extracellular. A helical membrane pass occupies residues 296 to 316 (VPGFGTDAVVIVSILFLVLLF). The Cytoplasmic portion of the chain corresponds to 317-325 (SVQRFGTGK). A helical transmembrane segment spans residues 326 to 346 (VGFMFAPILALWFINLGTIGI). At 347-379 (YNLAKYDISVVRAFNPVYIYLFFQTNGIKAWSA) the chain is on the extracellular side. A helical transmembrane segment spans residues 380 to 400 (LGGCVLCITGAEAMFADLGHF). Residues 401 to 406 (SVKSIQ) lie on the Cytoplasmic side of the membrane. The chain crosses the membrane as a helical span at residues 407–427 (VAFTAVVFPCLLIAYMGQAAY). The Extracellular portion of the chain corresponds to 428 to 441 (LMKYPFAVERIFYD). The helical transmembrane segment at 442–462 (SVPEILFWPVFVIATLAAMIA) threads the bilayer. The Cytoplasmic segment spans residues 463–498 (SQAMISATFSCIKQAMALGCFPRIKIIHTSKKVMGQ). The chain crosses the membrane as a helical span at residues 499–519 (IYIPVMNWFLMVMCIIIVATF). Topologically, residues 520 to 524 (RSTND) are extracellular. A helical transmembrane segment spans residues 525-545 (IANAYGIAEVGVMMVSTALVT). Topologically, residues 546 to 555 (LVMLLIWQTN) are cytoplasmic. Residues 556–578 (LFLVMCFPVIFGSVEFVYLTAVL) form a helical membrane-spanning segment. Residues 579–583 (SKIQE) are Extracellular-facing. Residues 584-604 (GGWLPLAFSSLFLCIMYTWNY) form a helical membrane-spanning segment. Topologically, residues 605-877 (GSVLKYQSEM…IMRVGMTYMV (273 aa)) are cytoplasmic.

It belongs to the HAK/KUP transporter (TC 2.A.72.3) family.

Its subcellular location is the membrane. High-affinity potassium transporter. The chain is Potassium transporter 23 (HAK23) from Oryza sativa subsp. japonica (Rice).